We begin with the raw amino-acid sequence, 305 residues long: Coiled-coil domain-containing protein 69-A (305 aa).

The N-myristoyl glycine moiety is linked to residue Gly-2. Positions 13–38 (LRKKKRQKAHQGGLTSQELNDLNAKT) are disordered. Residues 25–38 (GLTSQELNDLNAKT) are compositionally biased toward polar residues. Positions 42–281 (NEVLQKIKEY…QREKEQNLYR (240 aa)) form a coiled coil.

It belongs to the CCDC69 family.

It is found in the cytoplasm. It localises to the cytoskeleton. Its subcellular location is the spindle. The protein localises to the midbody. Functionally, may act as a scaffold to regulate the recruitment and assembly of spindle midzone components. The protein is Coiled-coil domain-containing protein 69-A (ccdc69-a) of Xenopus laevis (African clawed frog).